The primary structure comprises 40 residues: Beta-glucosidase 1 (40 aa).

It carries out the reaction Hydrolysis of terminal, non-reducing beta-D-glucosyl residues with release of beta-D-glucose.. In Passalora fulva (Tomato leaf mold), this protein is Beta-glucosidase 1.